A 222-amino-acid polypeptide reads, in one-letter code: Large ribosomal subunit protein uL4 (222 aa).

Belongs to the universal ribosomal protein uL4 family. As to quaternary structure, part of the 50S ribosomal subunit.

In terms of biological role, one of the primary rRNA binding proteins, this protein initially binds near the 5'-end of the 23S rRNA. It is important during the early stages of 50S assembly. It makes multiple contacts with different domains of the 23S rRNA in the assembled 50S subunit and ribosome. Forms part of the polypeptide exit tunnel. The chain is Large ribosomal subunit protein uL4 from Chlamydia trachomatis serovar L2 (strain ATCC VR-902B / DSM 19102 / 434/Bu).